The following is a 227-amino-acid chain: Thiocyanate methyltransferase 1 (227 aa).

Residues Trp36, Trp40, Trp47, and Gly74 each contribute to the S-adenosyl-L-methionine site. At Ser86 the chain carries Phosphoserine. S-adenosyl-L-methionine is bound by residues Asp95, 123 to 124 (DV), and Tyr139.

It belongs to the class I-like SAM-binding methyltransferase superfamily. TPMT family. As to expression, expressed in shoots, leaves, stems, inflorescences, flowers and green siliques.

It carries out the reaction thiocyanate + S-adenosyl-L-methionine = methyl thiocyanate + S-adenosyl-L-homocysteine. Functionally, S-adenosyl-L-methionine-dependent methyltransferase. Involved in glucosinolate metabolism and defense against phytopathogens. Highly reactive to thiocyanate (NCS(-)) derived from myrosinase-mediated hydrolysis of glucosinolates upon tissue damage. The polypeptide is Thiocyanate methyltransferase 1 (Arabidopsis thaliana (Mouse-ear cress)).